A 218-amino-acid polypeptide reads, in one-letter code: Cytochrome b6 (218 aa).

The chain crosses the membrane as a helical span at residues 35-55 (IFYCLGGITLVCFLIQFATGF). A heme c-binding site is contributed by Cys38. Residues His89 and His103 each contribute to the heme b site. 3 helical membrane-spanning segments follow: residues 93–113 (ASMM…TGGF), 119–139 (LTWV…VTGY), and 189–209 (LHTF…FLMI). Heme b-binding residues include His190 and His205.

It belongs to the cytochrome b family. PetB subfamily. The 4 large subunits of the cytochrome b6-f complex are cytochrome b6, subunit IV (17 kDa polypeptide, PetD), cytochrome f and the Rieske protein, while the 4 small subunits are PetG, PetL, PetM and PetN. The complex functions as a dimer. The cofactor is heme b. It depends on heme c as a cofactor.

It localises to the cellular thylakoid membrane. In terms of biological role, component of the cytochrome b6-f complex, which mediates electron transfer between photosystem II (PSII) and photosystem I (PSI), cyclic electron flow around PSI, and state transitions. The sequence is that of Cytochrome b6 from Synechococcus sp. (strain CC9311).